The sequence spans 239 residues: uncharacterized protein (239 aa).

The S4 RNA-binding domain maps to 1–65 (MRLDKLLANS…DYREFIYLMM (65 aa)). Asp-103 serves as the catalytic Nucleophile.

Belongs to the pseudouridine synthase RsuA family.

It carries out the reaction a uridine in RNA = a pseudouridine in RNA. This is an uncharacterized protein from Bacillus subtilis (strain 168).